We begin with the raw amino-acid sequence, 262 residues long: MQVDLLSSAQSAHALHLFHKHSPLVHCMTNDVVQTFTANTLLALGASPAMVIETEEASQFAAIASALLINVGTLTQPRAQAMSAAVEQATRSQTPWTLDPVAVGALDYRRRFCVELLSHKPTAIRGNASEIMALAGVANGGRGVDTTDAAANAIPAAQTLARETGAIVVVTGEVDYVTDGHRIVGIHGGDPLMTKVVGTGCALSAVVAACCALPGDTLENIASACHWMKQAGERAVARSEGPGSFVPHFLDALWQLTQEVQA.

Met-50 lines the substrate pocket. The ATP site is built by Arg-125 and Thr-171. Gly-198 lines the substrate pocket.

This sequence belongs to the Thz kinase family. The cofactor is Mg(2+).

The catalysed reaction is 5-(2-hydroxyethyl)-4-methylthiazole + ATP = 4-methyl-5-(2-phosphooxyethyl)-thiazole + ADP + H(+). It participates in cofactor biosynthesis; thiamine diphosphate biosynthesis; 4-methyl-5-(2-phosphoethyl)-thiazole from 5-(2-hydroxyethyl)-4-methylthiazole: step 1/1. Its function is as follows. Catalyzes the phosphorylation of the hydroxyl group of 4-methyl-5-beta-hydroxyethylthiazole (THZ). This chain is Hydroxyethylthiazole kinase, found in Escherichia coli O7:K1 (strain IAI39 / ExPEC).